The sequence spans 276 residues: NH(3)-dependent NAD(+) synthetase (276 aa).

43–50 (GISGGVDS) contacts ATP. Residue D49 coordinates Mg(2+). R146 contributes to the deamido-NAD(+) binding site. T166 serves as a coordination point for ATP. A Mg(2+)-binding site is contributed by E171. Residues K179 and D186 each coordinate deamido-NAD(+). 2 residues coordinate ATP: K195 and T217. Deamido-NAD(+) is bound at residue 266–267 (HK).

The protein belongs to the NAD synthetase family. In terms of assembly, homodimer.

The catalysed reaction is deamido-NAD(+) + NH4(+) + ATP = AMP + diphosphate + NAD(+) + H(+). The protein operates within cofactor biosynthesis; NAD(+) biosynthesis; NAD(+) from deamido-NAD(+) (ammonia route): step 1/1. Catalyzes the ATP-dependent amidation of deamido-NAD to form NAD. Uses ammonia as a nitrogen source. The chain is NH(3)-dependent NAD(+) synthetase from Aliivibrio salmonicida (strain LFI1238) (Vibrio salmonicida (strain LFI1238)).